A 234-amino-acid chain; its full sequence is Leucyl/phenylalanyl-tRNA--protein transferase (234 aa).

The protein belongs to the L/F-transferase family.

The protein localises to the cytoplasm. It carries out the reaction N-terminal L-lysyl-[protein] + L-leucyl-tRNA(Leu) = N-terminal L-leucyl-L-lysyl-[protein] + tRNA(Leu) + H(+). The enzyme catalyses N-terminal L-arginyl-[protein] + L-leucyl-tRNA(Leu) = N-terminal L-leucyl-L-arginyl-[protein] + tRNA(Leu) + H(+). It catalyses the reaction L-phenylalanyl-tRNA(Phe) + an N-terminal L-alpha-aminoacyl-[protein] = an N-terminal L-phenylalanyl-L-alpha-aminoacyl-[protein] + tRNA(Phe). Functions in the N-end rule pathway of protein degradation where it conjugates Leu, Phe and, less efficiently, Met from aminoacyl-tRNAs to the N-termini of proteins containing an N-terminal arginine or lysine. This chain is Leucyl/phenylalanyl-tRNA--protein transferase, found in Nitratidesulfovibrio vulgaris (strain ATCC 29579 / DSM 644 / CCUG 34227 / NCIMB 8303 / VKM B-1760 / Hildenborough) (Desulfovibrio vulgaris).